We begin with the raw amino-acid sequence, 140 residues long: Chromatin accessibility complex 16kD protein (140 aa).

The interval 111–140 (LNRSAGSDDDDDDDDDDDEEESESESESDE) is disordered. A compositionally biased stretch (acidic residues) spans 117–140 (SDDDDDDDDDDDEEESESESESDE).

In terms of assembly, component of the chromatin accessibility complex (CHRAC), composed of Chrac-14, Chrac-16, Acf and Iswi. Forms a heterodimer with Chrac-14. The Chrac-14/Chrac-16 heterodimer interacts with Acf (via N-terminus). Stabilizes the interaction between Chrac-14 and Iswi.

The protein localises to the nucleus. In terms of biological role, histone-like protein which promotes nucleosome sliding of ATP-dependent nucleosome remodeling complexes. Part of the chromatin-accessibility complex (CHRAC) which uses energy/ATP to increase the general accessibility of DNA in chromatin. As a heterodimer with Chrac-14, binds DNA and facilitates nucleosome sliding by Acf. As part of the CHRAC complex, required for oogenesis. The protein is Chromatin accessibility complex 16kD protein of Drosophila melanogaster (Fruit fly).